We begin with the raw amino-acid sequence, 180 residues long: MFDIGWSELLVIGVVALIAIGPKELPGVLRTVGQWMGKARRMAAEFQGQFNEAMREAEMADLKKSFDEVRDATSGLTRGDLMTRLTDSLGEPPRLEDIDKPATGADKPSVSSDAASASGSAAPEAGAAETFTADAGTNASGPLAITPQAHQDATAVEPPEGAPEISREGRDQTARGAKAS.

A helical membrane pass occupies residues 1–21 (MFDIGWSELLVIGVVALIAIG). The interval 77-180 (TRGDLMTRLT…DQTARGAKAS (104 aa)) is disordered. The segment covering 105–129 (ADKPSVSSDAASASGSAAPEAGAAE) has biased composition (low complexity).

It belongs to the TatB family. As to quaternary structure, the Tat system comprises two distinct complexes: a TatABC complex, containing multiple copies of TatA, TatB and TatC subunits, and a separate TatA complex, containing only TatA subunits. Substrates initially bind to the TatABC complex, which probably triggers association of the separate TatA complex to form the active translocon.

It localises to the cell inner membrane. Part of the twin-arginine translocation (Tat) system that transports large folded proteins containing a characteristic twin-arginine motif in their signal peptide across membranes. Together with TatC, TatB is part of a receptor directly interacting with Tat signal peptides. TatB may form an oligomeric binding site that transiently accommodates folded Tat precursor proteins before their translocation. The chain is Sec-independent protein translocase protein TatB from Nitrobacter winogradskyi (strain ATCC 25391 / DSM 10237 / CIP 104748 / NCIMB 11846 / Nb-255).